Consider the following 284-residue polypeptide: Tropomyosin-1 (284 aa).

Residues Met-1–Tyr-284 are a coiled coil. A disordered region spans residues Glu-103 to Glu-131.

It belongs to the tropomyosin family. Homodimer.

In terms of biological role, tropomyosin, in association with the troponin complex, plays a central role in the calcium dependent regulation of muscle contraction. The polypeptide is Tropomyosin-1 (Biomphalaria glabrata (Bloodfluke planorb)).